The sequence spans 462 residues: Hydroxymethylglutaryl-CoA synthase (462 aa).

E86 serves as the catalytic Proton donor/acceptor. C120 serves as the catalytic Acyl-thioester intermediate. Residues C120, T211, H261, K270, N338, and S372 each coordinate (3S)-3-hydroxy-3-methylglutaryl-CoA. Residue H261 is the Proton donor/acceptor of the active site.

Belongs to the thiolase-like superfamily. HMG-CoA synthase family.

The catalysed reaction is acetoacetyl-CoA + acetyl-CoA + H2O = (3S)-3-hydroxy-3-methylglutaryl-CoA + CoA + H(+). Its pathway is siderophore biosynthesis. Hydroxymethylglutaryl-CoA synthase involved in the biosynthesis of siderophore ferrichrome A which is contributing to organismal virulence. The first step of ferrichrome A biosynthesis is performed by the HMG-CoA synthase hcs1 which catalyzes the generation of HMG-CoA and CoA using acetoacetyl-CoA and acetyl-CoA as substrates. The enoyl-CoA isomerase/hydratase fer4 then catalyzes the conversion of hcs1-produced HMG-CoA to methylglutaconyl-CoA. The acyltransferase fer5 then fuses the fer4-generated methylglutaconyl-CoA with sid1-generated hydroxyornithine to yield methylglutaconyl hydroxyornithine. Methylglutaconyl hydroxyornithine is then available for use by the NRPS fer3 to generate ferrichrome A. This Mycosarcoma maydis (Corn smut fungus) protein is Hydroxymethylglutaryl-CoA synthase.